The following is a 480-amino-acid chain: ATP synthase subunit beta (480 aa).

Residue 166–173 coordinates ATP; sequence GGAGVGKT.

This sequence belongs to the ATPase alpha/beta chains family. As to quaternary structure, F-type ATPases have 2 components, CF(1) - the catalytic core - and CF(0) - the membrane proton channel. CF(1) has five subunits: alpha(3), beta(3), gamma(1), delta(1), epsilon(1). CF(0) has three main subunits: a(1), b(2) and c(9-12). The alpha and beta chains form an alternating ring which encloses part of the gamma chain. CF(1) is attached to CF(0) by a central stalk formed by the gamma and epsilon chains, while a peripheral stalk is formed by the delta and b chains.

The protein localises to the cell membrane. It carries out the reaction ATP + H2O + 4 H(+)(in) = ADP + phosphate + 5 H(+)(out). In terms of biological role, produces ATP from ADP in the presence of a proton gradient across the membrane. The catalytic sites are hosted primarily by the beta subunits. This is ATP synthase subunit beta from Streptomyces griseus subsp. griseus (strain JCM 4626 / CBS 651.72 / NBRC 13350 / KCC S-0626 / ISP 5235).